A 210-amino-acid polypeptide reads, in one-letter code: Uridine kinase (210 aa).

ATP is bound at residue 12-19 (GGSGSGKT).

It belongs to the uridine kinase family.

The protein resides in the cytoplasm. The catalysed reaction is uridine + ATP = UMP + ADP + H(+). It catalyses the reaction cytidine + ATP = CMP + ADP + H(+). It participates in pyrimidine metabolism; CTP biosynthesis via salvage pathway; CTP from cytidine: step 1/3. It functions in the pathway pyrimidine metabolism; UMP biosynthesis via salvage pathway; UMP from uridine: step 1/1. This chain is Uridine kinase, found in Bacillus pumilus (strain SAFR-032).